The sequence spans 690 residues: Probable xyloglucan glycosyltransferase 1 (690 aa).

2 consecutive transmembrane segments (helical) span residues 120–140 and 166–186; these read AFLLLSVLLLAVDVAAHAQGW and LEYLAPGLQFLANACVVLFLI. Asp-272 is a catalytic residue. Substrate-binding residues include Asp-331 and Asp-333. The active site involves Asp-425. Helical transmembrane passes span 503-523 and 528-548; these read LILPFYSFTLFCIILPMTMFV and LPAWVVCYIPATMSLLNILPA. Positions 607–637 are disordered; it reads QPKQQRVGSAPNLDSLAKESHPKKDSKKKKH. A run of 2 helical transmembrane segments spans residues 640–659 and 665–685; these read IYQKELALSFLLLTAAARSL and IHFYFLLFQGVSFLVVGLDLI.

Belongs to the glycosyltransferase 2 family. Plant cellulose synthase-like C subfamily.

The protein localises to the golgi apparatus membrane. Probable beta-1,4-glucan synthase rather involved in the synthesis of the xyloglucan backbone than cellulose. Seems to work simultaneously with xyloglucan 6-xylosyltransferase. Xyloglucan is a noncellulosic polysaccharides of plant cell wall and consists of a glucan backbone substituted by xylose, galactose and fucose. This Oryza sativa subsp. japonica (Rice) protein is Probable xyloglucan glycosyltransferase 1 (CSLC1).